The chain runs to 268 residues: Glucosamine-6-phosphate deaminase (268 aa).

Aspartate 67 (proton acceptor; for enolization step) is an active-site residue. Catalysis depends on asparagine 137, which acts as the For ring-opening step. Histidine 139 functions as the Proton acceptor; for ring-opening step in the catalytic mechanism. Glutamate 144 serves as the catalytic For ring-opening step.

It belongs to the glucosamine/galactosamine-6-phosphate isomerase family. NagB subfamily. As to quaternary structure, homohexamer.

It catalyses the reaction alpha-D-glucosamine 6-phosphate + H2O = beta-D-fructose 6-phosphate + NH4(+). Its pathway is amino-sugar metabolism; N-acetylneuraminate degradation; D-fructose 6-phosphate from N-acetylneuraminate: step 5/5. Catalyzes the reversible isomerization-deamination of glucosamine 6-phosphate (GlcN6P) to form fructose 6-phosphate (Fru6P) and ammonium ion. The chain is Glucosamine-6-phosphate deaminase from Colwellia psychrerythraea (strain 34H / ATCC BAA-681) (Vibrio psychroerythus).